A 350-amino-acid polypeptide reads, in one-letter code: Hydroxymethylglutaryl-CoA synthase (350 aa).

Glu-83 functions as the Proton donor/acceptor in the catalytic mechanism. Cys-115 acts as the Acyl-thioester intermediate in catalysis. Residues Cys-115 and Thr-156 each contribute to the (3S)-3-hydroxy-3-methylglutaryl-CoA site. Arg-204 serves as a coordination point for CoA. The (3S)-3-hydroxy-3-methylglutaryl-CoA site is built by Thr-206 and His-239. His-239 (proton donor/acceptor) is an active-site residue. Lys-244 serves as a coordination point for CoA. Residues Asn-271 and Ser-301 each contribute to the (3S)-3-hydroxy-3-methylglutaryl-CoA site.

This sequence belongs to the thiolase-like superfamily. Archaeal HMG-CoA synthase family. In terms of assembly, interacts with acetoacetyl-CoA thiolase that catalyzes the precedent step in the pathway and with a DUF35 protein. The acetoacetyl-CoA thiolase/HMG-CoA synthase complex channels the intermediate via a fused CoA-binding site, which allows for efficient coupling of the endergonic thiolase reaction with the exergonic HMGCS reaction.

The enzyme catalyses acetoacetyl-CoA + acetyl-CoA + H2O = (3S)-3-hydroxy-3-methylglutaryl-CoA + CoA + H(+). It participates in metabolic intermediate biosynthesis; (R)-mevalonate biosynthesis; (R)-mevalonate from acetyl-CoA: step 2/3. Functionally, catalyzes the condensation of acetyl-CoA with acetoacetyl-CoA to form 3-hydroxy-3-methylglutaryl-CoA (HMG-CoA). Functions in the mevalonate (MVA) pathway leading to isopentenyl diphosphate (IPP), a key precursor for the biosynthesis of isoprenoid compounds that are building blocks of archaeal membrane lipids. In Thermococcus onnurineus (strain NA1), this protein is Hydroxymethylglutaryl-CoA synthase.